We begin with the raw amino-acid sequence, 1131 residues long: Tyrosine-protein kinase JAK2 (1131 aa).

Residues 1–239 are interaction with cytokine/interferon/growth hormone receptors; it reads MGMACLTMTE…RYRFRRFIEQ (239 aa). Positions 37–380 constitute an FERM domain; the sequence is PVLQVYLYHS…GYYRLTADAH (344 aa). Tyr-119 is modified (phosphotyrosine; by autocatalysis). A phosphotyrosine mark is found at Tyr-372 and Tyr-373. Residues 401 to 482 form the SH2; atypical domain; sequence HGPISMDFAI…NLKDLLNCYQ (82 aa). Ser-523 bears the Phosphoserine mark. The Protein kinase 1 domain occupies 545-809; that stretch reads LIFNESLGQG…AIIRDLNSLF (265 aa). 2 positions are modified to phosphotyrosine: Tyr-570 and Tyr-813. Residues 849–1126 form the Protein kinase 2 domain; the sequence is LKFLQQLGKG…RDLALRVDQI (278 aa). An ATP-binding site is contributed by 855-863; it reads LGKGNFGSV. The residue at position 868 (Tyr-868) is a Phosphotyrosine; by autocatalysis. Residue Lys-882 participates in ATP binding. A phosphotyrosine; by autocatalysis mark is found at Tyr-966 and Tyr-972. Asp-976 functions as the Proton acceptor in the catalytic mechanism. Phosphotyrosine; by autocatalysis is present on residues Tyr-1007 and Tyr-1008.

This sequence belongs to the protein kinase superfamily. Tyr protein kinase family. JAK subfamily. Interacts with IL23R, SKB1 and STAM2. Interacts with EPOR. Interacts with LYN. Interacts with SIRPA. Interacts with SH2B1. Interacts with TEC. Interacts with IFNGR2 (via intracellular domain). Interacts with LEPR (Isoform B). Interacts with HSP90AB1; promotes functional activation in a heat shock-dependent manner. Interacts with STRA6. Interacts with ASB2; the interaction targets JAK2 for Notch-induced proteasomal degradation. Mg(2+) is required as a cofactor. Post-translationally, autophosphorylated, leading to regulate its activity. Leptin promotes phosphorylation on tyrosine residues, including phosphorylation on Tyr-813. Autophosphorylation on Tyr-119 in response to EPO down-regulates its kinase activity. Autophosphorylation on Tyr-868, Tyr-966 and Tyr-972 in response to growth hormone (GH) are required for maximal kinase activity. Also phosphorylated by TEC. Phosphorylated on tyrosine residues in response to interferon gamma signaling. Phosphorylated on tyrosine residues in response to a signaling cascade that is activated by increased cellular retinol. Undergoes Notch-induced ubiquitination and subsequent proteasomal degradation which is mediated by ASB1 or ASB2, the substrate-recognition components of probable ECS E3 ubiquitin-protein ligase complexes.

It localises to the endomembrane system. The protein localises to the cytoplasm. The protein resides in the nucleus. The catalysed reaction is L-tyrosyl-[protein] + ATP = O-phospho-L-tyrosyl-[protein] + ADP + H(+). With respect to regulation, regulated by autophosphorylation, can both activate or decrease activity. Heme regulates its activity by enhancing the phosphorylation on Tyr-1007 and Tyr-1008. In terms of biological role, non-receptor tyrosine kinase involved in various processes such as cell growth, development, differentiation or histone modifications. Mediates essential signaling events in both innate and adaptive immunity. In the cytoplasm, plays a pivotal role in signal transduction via its association with type I receptors such as growth hormone (GHR), prolactin (PRLR), leptin (LEPR), erythropoietin (EPOR), thrombopoietin (THPO); or type II receptors including IFN-alpha, IFN-beta, IFN-gamma and multiple interleukins. Following ligand-binding to cell surface receptors, phosphorylates specific tyrosine residues on the cytoplasmic tails of the receptor, creating docking sites for STATs proteins. Subsequently, phosphorylates the STATs proteins once they are recruited to the receptor. Phosphorylated STATs then form homodimer or heterodimers and translocate to the nucleus to activate gene transcription. For example, cell stimulation with erythropoietin (EPO) during erythropoiesis leads to JAK2 autophosphorylation, activation, and its association with erythropoietin receptor (EPOR) that becomes phosphorylated in its cytoplasmic domain. Then, STAT5 (STAT5A or STAT5B) is recruited, phosphorylated and activated by JAK2. Once activated, dimerized STAT5 translocates into the nucleus and promotes the transcription of several essential genes involved in the modulation of erythropoiesis. Part of a signaling cascade that is activated by increased cellular retinol and that leads to the activation of STAT5 (STAT5A or STAT5B). In addition, JAK2 mediates angiotensin-2-induced ARHGEF1 phosphorylation. Plays a role in cell cycle by phosphorylating CDKN1B. Cooperates with TEC through reciprocal phosphorylation to mediate cytokine-driven activation of FOS transcription. In the nucleus, plays a key role in chromatin by specifically mediating phosphorylation of 'Tyr-41' of histone H3 (H3Y41ph), a specific tag that promotes exclusion of CBX5 (HP1 alpha) from chromatin. Up-regulates the potassium voltage-gated channel activity of KCNA3. This Sus scrofa (Pig) protein is Tyrosine-protein kinase JAK2.